Here is an 802-residue protein sequence, read N- to C-terminus: Phenylalanine--tRNA ligase beta subunit (802 aa).

Residues 39-154 (AEGLSKLVVG…EDAVPGDSIF (116 aa)) form the tRNA-binding domain. In terms of domain architecture, B5 spans 407–482 (TEPVQVSTSL…RIYGYEKLPT (76 aa)). Positions 460, 466, 469, and 470 each coordinate Mg(2+). The 94-residue stretch at 709–802 (TKFPAVSRDI…LTEKVEAEVR (94 aa)) folds into the FDX-ACB domain.

The protein belongs to the phenylalanyl-tRNA synthetase beta subunit family. Type 1 subfamily. In terms of assembly, tetramer of two alpha and two beta subunits. It depends on Mg(2+) as a cofactor.

The protein localises to the cytoplasm. It catalyses the reaction tRNA(Phe) + L-phenylalanine + ATP = L-phenylalanyl-tRNA(Phe) + AMP + diphosphate + H(+). This chain is Phenylalanine--tRNA ligase beta subunit, found in Streptococcus thermophilus (strain CNRZ 1066).